Consider the following 369-residue polypeptide: Quinolinate synthase (369 aa).

Residues His-47 and Ser-64 each contribute to the iminosuccinate site. Cys-111 is a [4Fe-4S] cluster binding site. Residues 142 to 144 (YVN) and Ser-163 each bind iminosuccinate. Position 231 (Cys-231) interacts with [4Fe-4S] cluster. Residues 257–259 (HPE) and Thr-274 each bind iminosuccinate. Position 321 (Cys-321) interacts with [4Fe-4S] cluster.

The protein belongs to the quinolinate synthase family. Type 3 subfamily. It depends on [4Fe-4S] cluster as a cofactor.

The protein resides in the cytoplasm. It catalyses the reaction iminosuccinate + dihydroxyacetone phosphate = quinolinate + phosphate + 2 H2O + H(+). Its pathway is cofactor biosynthesis; NAD(+) biosynthesis; quinolinate from iminoaspartate: step 1/1. Its function is as follows. Catalyzes the condensation of iminoaspartate with dihydroxyacetone phosphate to form quinolinate. The sequence is that of Quinolinate synthase from Bacillus pumilus (strain SAFR-032).